Consider the following 557-residue polypeptide: Protein Red (557 aa).

Residues 1-90 form a disordered region; the sequence is MPERDSEPFS…YAKLRQQEIE (90 aa). Over residues 16-25 the composition is skewed to basic and acidic residues; that stretch reads DGHDVDDPHS. A compositionally biased stretch (low complexity) spans 42–53; it reads TPRAAPTSAPPS. Lys98 and Lys137 each carry N6-acetyllysine. Residue Lys151 forms a Glycyl lysine isopeptide (Lys-Gly) (interchain with G-Cter in SUMO2) linkage. A disordered region spans residues 181–205; the sequence is KEKEEEELMEKPQKETKKDEDPENK. At Ser287 the chain carries Phosphoserine. Residues 294–303 are compositionally biased toward basic residues; sequence RNKKLKKKDK. Residues 294–402 are disordered; it reads RNKKLKKKDK…PMDVDKGPGS (109 aa). A compositionally biased stretch (basic and acidic residues) spans 304–313; sequence GKLEEKKPPE. Residues Lys310 and Lys331 each participate in a glycyl lysine isopeptide (Lys-Gly) (interchain with G-Cter in SUMO2) cross-link. Residues 332 to 398 show a composition bias toward basic and acidic residues; that stretch reads TPRDKERERY…VDDEPMDVDK (67 aa). Tandem repeats lie at residues 342 to 343, 344 to 345, 346 to 347, 348 to 349, 350 to 351, 352 to 353, 354 to 355, 356 to 357, 358 to 359, 360 to 361, 362 to 363, 364 to 365, 366 to 367, 368 to 369, 370 to 371, 372 to 373, and 374 to 375. The segment at 342–375 is 17 X 2 AA tandem repeats of R-[ED]; sequence RERERDRERDRDRERDRERDRERERERDRERERE. Glycyl lysine isopeptide (Lys-Gly) (interchain with G-Cter in SUMO2) cross-links involve residues Lys386, Lys388, Lys404, and Lys408. Phosphoserine occurs at positions 417 and 460. Residue Thr485 is modified to Phosphothreonine. Glycyl lysine isopeptide (Lys-Gly) (interchain with G-Cter in SUMO2) cross-links involve residues Lys496, Lys501, and Lys509. Position 536 is a phosphoserine (Ser536). Glycyl lysine isopeptide (Lys-Gly) (interchain with G-Cter in SUMO2) cross-links involve residues Lys541, Lys543, and Lys553.

The protein belongs to the RED family. In terms of assembly, component of the spliceosome B complex. Interacts with SMU1. Interacts with MAD1L1. May interact with DHX15. Ubiquitous.

It is found in the nucleus. The protein localises to the nucleoplasm. Its subcellular location is the chromosome. The protein resides in the cytoplasm. It localises to the cytoskeleton. It is found in the spindle pole. Its function is as follows. Involved in pre-mRNA splicing as a component of the spliceosome. Auxiliary spliceosomal protein that regulates selection of alternative splice sites in a small set of target pre-mRNA species. Required for normal mitotic cell cycle progression. Recruits MAD1L1 and MAD2L1 to kinetochores, and is required to trigger the spindle assembly checkpoint. Required for normal accumulation of SMU1. The polypeptide is Protein Red (Ik) (Mus musculus (Mouse)).